A 309-amino-acid chain; its full sequence is Probable WRKY transcription factor 26 (309 aa).

The segment at 1-24 is disordered; that stretch reads MGSFDRQRAVPKFKTATPSPLPLS. The WRKY 1 DNA-binding region spans 111–176; that stretch reads SSNKTSDDGY…YKGSHNHPKP (66 aa). Residues Cys-142, Cys-147, His-171, and His-173 each coordinate Zn(2+). The tract at residues 167-210 is disordered; that stretch reads YKGSHNHPKPQSTKRSSSTAIAAHQNSSNGDGKDIGEDETEAKR. Positions 175–196 are enriched in polar residues; it reads KPQSTKRSSSTAIAAHQNSSNG. Basic and acidic residues predominate over residues 197-210; that stretch reads DGKDIGEDETEAKR. A DNA-binding region (WRKY 2) is located at residues 228–293; it reads SDIDILDDGY…YEGKHKHQIP (66 aa). Residues Cys-259, Cys-264, His-288, and His-290 each contribute to the Zn(2+) site.

It belongs to the WRKY group I family. As to quaternary structure, interacts with VQ10.

The protein localises to the nucleus. Its function is as follows. Transcription factor. Interacts specifically with the W box (5'-(T)TGAC[CT]-3'), a frequently occurring elicitor-responsive cis-acting element. Functions with WRKY25 and WRKY33 as positive regulator of plant thermotolerance by partially participating in ethylene-response signal transduction pathway. This chain is Probable WRKY transcription factor 26 (WRKY26), found in Arabidopsis thaliana (Mouse-ear cress).